A 433-amino-acid polypeptide reads, in one-letter code: Protein arginine N-methyltransferase 2 (433 aa).

The interval 1–27 (MSTSGCSSEKSDFQDSTEGEEEEDTQS) is disordered. Positions 15 to 26 (DSTEGEEEEDTQ) are enriched in acidic residues. The SH3 domain occupies 30-89 (LCMREYVVIRDYMAADATQLSLCFGDKVLLLSAVTQDWWWVKHNGICGYVPASYLHDALN). The region spanning 102–416 (DEEYYGSYKT…MSVTLSWVIN (315 aa)) is the SAM-dependent MTase PRMT-type domain. H115, R124, G148, E171, and E200 together coordinate S-adenosyl-L-methionine. Catalysis depends on residues E214 and E223.

Belongs to the class I-like SAM-binding methyltransferase superfamily. Protein arginine N-methyltransferase family. Interacts with ctnnb1.

It localises to the cytoplasm. The protein localises to the nucleus. It carries out the reaction L-arginyl-[protein] + 2 S-adenosyl-L-methionine = N(omega),N(omega)-dimethyl-L-arginyl-[protein] + 2 S-adenosyl-L-homocysteine + 2 H(+). Arginine methyltransferase that methylates the guanidino nitrogens of arginyl residues in proteins such as histones. Involved in growth regulation. Involved in embryonic dorsal development. This chain is Protein arginine N-methyltransferase 2 (prmt2), found in Xenopus tropicalis (Western clawed frog).